Consider the following 380-residue polypeptide: Acyl-coenzyme A diphosphatase NUDT19 (380 aa).

The 257-residue stretch at 8–264 (WKEAATLIVA…KIWIPPPQFY (257 aa)) folds into the Nudix hydrolase domain. Residues 115-136 (SLIPGEVATRICAIRETFEESG) carry the Nudix box motif. Mg(2+) contacts are provided by glutamate 130 and glutamate 134. The Microbody targeting signal motif lies at 378–380 (NKL).

This sequence belongs to the Nudix hydrolase family. Monomer. Mg(2+) serves as cofactor. It depends on Mn(2+) as a cofactor.

It localises to the peroxisome. It carries out the reaction an acyl-CoA + H2O = an acyl-4'-phosphopantetheine + adenosine 3',5'-bisphosphate + 2 H(+). It catalyses the reaction CoA + H2O = (R)-4'-phosphopantetheine + adenosine 3',5'-bisphosphate + 2 H(+). The enzyme catalyses hexanoyl-CoA + H2O = hexanoyl-4'-phosphopantetheine + adenosine 3',5'-bisphosphate + 2 H(+). The catalysed reaction is octanoyl-CoA + H2O = S-octanoyl-4'-phosphopantetheine + adenosine 3',5'-bisphosphate + 2 H(+). It carries out the reaction butanoyl-CoA + H2O = S-butanoyl-4'-phosphopantetheine + adenosine 3',5'-bisphosphate + 2 H(+). It catalyses the reaction propanoyl-CoA + H2O = propanoyl-4'-phosphopantetheine + adenosine 3',5'-bisphosphate + 2 H(+). The enzyme catalyses malonyl-CoA + H2O = malonyl-4'-phosphopantetheine + adenosine 3',5'-bisphosphate + 2 H(+). The catalysed reaction is succinyl-CoA + H2O = succinyl-4'-phosphopantetheine + adenosine 3',5'-bisphosphate + 2 H(+). It carries out the reaction choloyl-CoA + H2O = S-choloyl-4'-phosphopantetheine + adenosine 3',5'-bisphosphate + 2 H(+). It catalyses the reaction 4,8-dimethylnonanoyl-CoA + H2O = S-(4,8-dimethylnonanoyl)-4'-phosphopantetheine + adenosine 3',5'-bisphosphate + 2 H(+). The enzyme catalyses (9Z,12Z,15Z)-octadecatrienoyl-CoA + H2O = S-(9Z,12Z,15Z-octadecatrienoyl)-4'-phosphopantetheine + adenosine 3',5'-bisphosphate + 2 H(+). The catalysed reaction is (9Z,12Z)-octadecadienoyl-CoA + H2O = S-(9Z,12Z-octadecadienoyl)-4'-phosphopantetheine + adenosine 3',5'-bisphosphate + 2 H(+). It carries out the reaction (9Z)-hexadecenoyl-CoA + H2O = S-(9Z-hexadecenoyl)-4'-phosphopantetheine + adenosine 3',5'-bisphosphate + 2 H(+). It catalyses the reaction (9Z)-tetradecenoyl-CoA + H2O = S-(9Z-tetradecenoyl)-4'-phosphopantetheine + adenosine 3',5'-bisphosphate + 2 H(+). The enzyme catalyses (6Z)-octenoyl-CoA + H2O = S-(6Z-octenoyl)-4'-phosphopantetheine + adenosine 3',5'-bisphosphate + 2 H(+). The catalysed reaction is hexadecanoyl-CoA + H2O = S-hexadecanoyl-4'-phosphopantetheine + adenosine 3',5'-bisphosphate + 2 H(+). It carries out the reaction tetradecanoyl-CoA + H2O = tetradecanoyl-4'-phosphopantetheine + adenosine 3',5'-bisphosphate + 2 H(+). It catalyses the reaction dodecanoyl-CoA + H2O = S-dodecanoyl-4'-phosphopantetheine + adenosine 3',5'-bisphosphate + 2 H(+). The enzyme catalyses a 5'-end CoA-ribonucleoside in mRNA + H2O = a 5'-end phospho-adenosine-phospho-ribonucleoside in mRNA + (R)-4'-phosphopantetheine + 2 H(+). Functionally, fatty acyl-coenzyme A (CoA) diphosphatase that hydrolyzes fatty acyl-CoA to yield acyl-4'-phosphopantetheine and adenosine 3',5'-bisphosphate. Mediates the hydrolysis of a wide range of CoA esters, including choloyl-CoA and branched-chain fatty-acyl-CoA esters and at low substrate concentrations medium and long-chain fatty-acyl-CoA esters are the primary substrates. Highest activity seen with medium-chain acyl-CoA esters and higher rates of activity seen with the unsaturated acyl-CoA esters compared with the saturated esters. Exhibits decapping activity towards dpCoA-capped RNAs in vitro. The chain is Acyl-coenzyme A diphosphatase NUDT19 (nudt19) from Xenopus laevis (African clawed frog).